The primary structure comprises 274 residues: Probable endonuclease LCL3 (274 aa).

Residues A15 to Y32 traverse the membrane as a helical segment. A TNase-like domain is found at H53–Q261. The active site involves R151. Ca(2+) is bound at residue D156. Residues E159 and R199 contribute to the active site.

The protein belongs to the LCL3 family.

It localises to the mitochondrion. It is found in the membrane. The chain is Probable endonuclease LCL3 (LCL3) from Saccharomyces cerevisiae (strain Lalvin EC1118 / Prise de mousse) (Baker's yeast).